Consider the following 747-residue polypeptide: Protein FAM83C (747 aa).

A DUF1669 region spans residues 1-309; the sequence is MFGGPGPGVL…LYAESQPVEG (309 aa). Disordered stretches follow at residues 322 to 352, 374 to 412, 462 to 484, 517 to 550, 588 to 633, 646 to 672, and 692 to 715; these read LRPPPVALAFRPDVPSPTSSLPSSTSLSSIK, TGVVSSSLGPARREASGQPSLHRQLSDPNHGSPPGLYRA, LSRFPENGLPGSQEPSPLRGRWV, AREVGDPDSGVTPNSGPLRPGEQAPEDRRLSPSQ, NQSR…LGHS, GEGPGPNGLPISSPARTAGAGSGDEKR, and ARQGTEPGGPKGGHLNGGNSDLVR. Low complexity predominate over residues 328–350; the sequence is ALAFRPDVPSPTSSLPSSTSLSS. The segment covering 390–402 has biased composition (polar residues); the sequence is GQPSLHRQLSDPN. Gly residues predominate over residues 697-707; sequence EPGGPKGGHLN.

The protein belongs to the FAM83 family. May interact with RAF1. In terms of processing, phosphorylated in vitro by CSNK1A1.

The protein localises to the cytoplasm. Its function is as follows. May play a role in MAPK signaling. The polypeptide is Protein FAM83C (Homo sapiens (Human)).